Here is a 694-residue protein sequence, read N- to C-terminus: Maintenance of telomere capping protein 4 (694 aa).

A compositionally biased stretch (basic and acidic residues) spans 1–12 (MTHTNEHDHKAE). Residues 1–26 (MTHTNEHDHKAEQQQNGRGDTTTETV) form a disordered region. Polar residues predominate over residues 13-26 (QQQNGRGDTTTETV). Ser85 bears the Phosphoserine mark. Low complexity predominate over residues 211-222 (YSPSNESSGSSS). 3 disordered regions span residues 211–287 (YSPS…PEAQ), 325–437 (AKGS…TETY), and 465–511 (KTSN…PVGL). Over residues 223-243 (SRRHHGHHIHPRRHLQHHSRV) the composition is skewed to basic residues. The segment covering 244–257 (RTANSVHSNTQSLT) has biased composition (polar residues). Thr263 is subject to Phosphothreonine. Positions 276–287 (MITKIATTPEAQ) are enriched in polar residues. Low complexity predominate over residues 403–417 (SNGGTSRRSSNNGES). The segment covering 418–437 (ISTNSSKSSMGITFGNTETY) has biased composition (polar residues). The segment covering 471–485 (LRAEGEQALESDKEL) has biased composition (basic and acidic residues). Phosphoserine is present on residues Ser481 and Ser491. Tyr493 is modified (phosphotyrosine). A helical membrane pass occupies residues 655-675 (RLLEFGIVLVLWTIWFLFSVL).

Its subcellular location is the membrane. It localises to the cytoplasm. The sequence is that of Maintenance of telomere capping protein 4 (MTC4) from Saccharomyces cerevisiae (strain ATCC 204508 / S288c) (Baker's yeast).